The chain runs to 201 residues: Ubiquitin-conjugating enzyme E2 E2 (201 aa).

Residues 1–10 (MSTEAQRVDD) show a composition bias toward basic and acidic residues. Positions 1–55 (MSTEAQRVDDSPSTSGGSSDGDQRESVQQEPEREQVQPKKKEGKISSKTAAKLST) are disordered. Serine 2 is subject to N-acetylserine. Phosphoserine is present on residues serine 11, serine 15, serine 18, and serine 19. Basic and acidic residues predominate over residues 21–45 (GDQRESVQQEPEREQVQPKKKEGKI). The span at 46 to 55 (SSKTAAKLST) shows a compositional bias: low complexity. In terms of domain architecture, UBC core spans 55 to 201 (TSAKRIQKEL…ARQWTKRYAT (147 aa)). Cysteine 139 serves as the catalytic Glycyl thioester intermediate.

It belongs to the ubiquitin-conjugating enzyme family. In terms of processing, autoubiquitinated in vitro.

It catalyses the reaction S-ubiquitinyl-[E1 ubiquitin-activating enzyme]-L-cysteine + [E2 ubiquitin-conjugating enzyme]-L-cysteine = [E1 ubiquitin-activating enzyme]-L-cysteine + S-ubiquitinyl-[E2 ubiquitin-conjugating enzyme]-L-cysteine.. It participates in protein modification; protein ubiquitination. In terms of biological role, accepts ubiquitin from the E1 complex and catalyzes its covalent attachment to other proteins. In vitro catalyzes 'Lys-11'- and 'Lys-48'-, as well as 'Lys-63'-linked polyubiquitination. Catalyzes the ISGylation of influenza A virus NS1 protein. This chain is Ubiquitin-conjugating enzyme E2 E2, found in Homo sapiens (Human).